The chain runs to 235 residues: MSVHIEAKQGEIAESILLPGDPLRAKYIAETFLEDVTCYNNVRGMLGFTGTYKGKRVSVQGTGMGVPSISIYVNELIQSYGVKNLIRVGTCGAIQKDVKVRDVIIAMTACTDSNMNRLTFPGFDFAPAANFDLLKKAYDAGTEKGLHVRVGNVLTADVFYRESMDMVKKLADYGVLAVEMETTALYTLAAKYGVNALSVLTVSDHIFTGEETTSEERQTTFNEMIEIALDAAIQQ.

His4 provides a ligand contact to a purine D-ribonucleoside. Residues Gly20, Arg24, Arg43, and 87–90 (RVGT) contribute to the phosphate site. A purine D-ribonucleoside-binding positions include Glu162, 179–181 (EME), and 203–204 (SD). Asp204 functions as the Proton donor in the catalytic mechanism.

Belongs to the PNP/UDP phosphorylase family. As to quaternary structure, homohexamer; trimer of homodimers.

It carries out the reaction a purine D-ribonucleoside + phosphate = a purine nucleobase + alpha-D-ribose 1-phosphate. The catalysed reaction is a purine 2'-deoxy-D-ribonucleoside + phosphate = a purine nucleobase + 2-deoxy-alpha-D-ribose 1-phosphate. Catalyzes the reversible phosphorolytic breakdown of the N-glycosidic bond in the beta-(deoxy)ribonucleoside molecules, with the formation of the corresponding free purine bases and pentose-1-phosphate. The chain is Purine nucleoside phosphorylase DeoD-type from Bacillus cereus (strain ZK / E33L).